The primary structure comprises 525 residues: Mitochondrial-processing peptidase subunit alpha (525 aa).

The transit peptide at 1-33 directs the protein to the mitochondrion; that stretch reads MAAVVLAATRLLRGSGSWGCSRLRFGPPAYRRF. Lysine 64 carries the post-translational modification N6-succinyllysine. An N6-acetyllysine modification is found at lysine 299.

It belongs to the peptidase M16 family. As to quaternary structure, heterodimer of PMPCA (alpha) and PMPCB (beta) subunits, forming the mitochondrial processing protease (MPP) in which PMPCA is involved in substrate recognition and binding and PMPCB is the catalytic subunit.

The protein resides in the mitochondrion matrix. It is found in the mitochondrion inner membrane. Substrate recognition and binding subunit of the essential mitochondrial processing protease (MPP), which cleaves the mitochondrial sequence off newly imported precursors proteins. The sequence is that of Mitochondrial-processing peptidase subunit alpha (PMPCA) from Pongo abelii (Sumatran orangutan).